Consider the following 379-residue polypeptide: Bifunctional enzyme IspD/IspF (379 aa).

The segment at 1–223 (MTVAVIIVAA…RERKGLTMDV (223 aa)) is 2-C-methyl-D-erythritol 4-phosphate cytidylyltransferase. A 2-C-methyl-D-erythritol 2,4-cyclodiphosphate synthase region spans residues 224–379 (RLGNGYDVHA…SIATVTLIGA (156 aa)). A divalent metal cation-binding residues include D230 and H232. 4-CDP-2-C-methyl-D-erythritol 2-phosphate is bound by residues 230 to 232 (DVH) and 256 to 257 (HS). Residue H264 participates in a divalent metal cation binding. 4-CDP-2-C-methyl-D-erythritol 2-phosphate contacts are provided by residues 278–280 (DIG), 354–357 (TTSE), F361, and R364.

In the N-terminal section; belongs to the IspD/TarI cytidylyltransferase family. IspD subfamily. This sequence in the C-terminal section; belongs to the IspF family. Requires a divalent metal cation as cofactor.

It carries out the reaction 2-C-methyl-D-erythritol 4-phosphate + CTP + H(+) = 4-CDP-2-C-methyl-D-erythritol + diphosphate. It catalyses the reaction 4-CDP-2-C-methyl-D-erythritol 2-phosphate = 2-C-methyl-D-erythritol 2,4-cyclic diphosphate + CMP. It functions in the pathway isoprenoid biosynthesis; isopentenyl diphosphate biosynthesis via DXP pathway; isopentenyl diphosphate from 1-deoxy-D-xylulose 5-phosphate: step 2/6. It participates in isoprenoid biosynthesis; isopentenyl diphosphate biosynthesis via DXP pathway; isopentenyl diphosphate from 1-deoxy-D-xylulose 5-phosphate: step 4/6. Its function is as follows. Bifunctional enzyme that catalyzes the formation of 4-diphosphocytidyl-2-C-methyl-D-erythritol from CTP and 2-C-methyl-D-erythritol 4-phosphate (MEP) (IspD), and catalyzes the conversion of 4-diphosphocytidyl-2-C-methyl-D-erythritol 2-phosphate (CDP-ME2P) to 2-C-methyl-D-erythritol 2,4-cyclodiphosphate (ME-CPP) with a corresponding release of cytidine 5-monophosphate (CMP) (IspF). The chain is Bifunctional enzyme IspD/IspF from Rhodobacter capsulatus (strain ATCC BAA-309 / NBRC 16581 / SB1003).